Consider the following 126-residue polypeptide: Holo-[acyl-carrier-protein] synthase (126 aa).

Mg(2+)-binding residues include Asp-9 and Glu-59.

This sequence belongs to the P-Pant transferase superfamily. AcpS family. The cofactor is Mg(2+).

The protein resides in the cytoplasm. It catalyses the reaction apo-[ACP] + CoA = holo-[ACP] + adenosine 3',5'-bisphosphate + H(+). Transfers the 4'-phosphopantetheine moiety from coenzyme A to a Ser of acyl-carrier-protein. This is Holo-[acyl-carrier-protein] synthase from Myxococcus xanthus (strain DK1622).